Reading from the N-terminus, the 167-residue chain is Small ribosomal subunit protein uS5 (167 aa).

In terms of domain architecture, S5 DRBM spans 11-74 (LQEKLIAVNR…DKARRNMTTI (64 aa)).

It belongs to the universal ribosomal protein uS5 family. In terms of assembly, part of the 30S ribosomal subunit. Contacts proteins S4 and S8.

In terms of biological role, with S4 and S12 plays an important role in translational accuracy. Functionally, located at the back of the 30S subunit body where it stabilizes the conformation of the head with respect to the body. In Baumannia cicadellinicola subsp. Homalodisca coagulata, this protein is Small ribosomal subunit protein uS5.